Consider the following 106-residue polypeptide: Probable insulin-like peptide beta-type 1 (106 aa).

The first 19 residues, 1 to 19, serve as a signal peptide directing secretion; sequence MFSFFTYFLLSALLLSASC. The propeptide at 20–51 is removed; by convertase egl-3; sequence RQPSMDTSKADRILREIEMETELENQLSRARR. 4 disulfides stabilise this stretch: cysteine 60–cysteine 89, cysteine 72–cysteine 102, cysteine 76–cysteine 103, and cysteine 88–cysteine 93.

This sequence belongs to the insulin family. As to expression, expressed by ASI and ASJ sensory neurons and weakly by ventral cord motor neurons.

It localises to the secreted. Probable insulin-like peptide which negatively regulates synapse development at the neuromuscular junctions. Probably acts as a daf-2/InsR agonist ligand to prevent dauer formation under optimal environmental conditions. In Caenorhabditis elegans, this protein is Probable insulin-like peptide beta-type 1 (ins-4).